The sequence spans 219 residues: Thymidylate kinase (219 aa).

An ATP-binding site is contributed by 7-14 (GIDGAGKS).

It belongs to the thymidylate kinase family.

It carries out the reaction dTMP + ATP = dTDP + ADP. Functionally, phosphorylation of dTMP to form dTDP in both de novo and salvage pathways of dTTP synthesis. This Chlorobium limicola (strain DSM 245 / NBRC 103803 / 6330) protein is Thymidylate kinase.